We begin with the raw amino-acid sequence, 404 residues long: Tryptophan synthase beta chain (404 aa).

Lys94 carries the N6-(pyridoxal phosphate)lysine modification.

The protein belongs to the TrpB family. Tetramer of two alpha and two beta chains. Pyridoxal 5'-phosphate serves as cofactor.

The enzyme catalyses (1S,2R)-1-C-(indol-3-yl)glycerol 3-phosphate + L-serine = D-glyceraldehyde 3-phosphate + L-tryptophan + H2O. Its pathway is amino-acid biosynthesis; L-tryptophan biosynthesis; L-tryptophan from chorismate: step 5/5. Its function is as follows. The beta subunit is responsible for the synthesis of L-tryptophan from indole and L-serine. This chain is Tryptophan synthase beta chain, found in Staphylococcus aureus (strain bovine RF122 / ET3-1).